The chain runs to 556 residues: MTPAELSELITETARTTLDAHGLDSSVVPESATVERPRNPEHGDYATNIAMQVAKKAGTNPREFGTWLAESLGAHEGIDEATVAGPGFINIRLAAAAQGKIVEDILTVGANFGHGDELAGAAINLEFVSANPTGPIHLGGTRWAAVGDSLGRVLNARGAKVTREYYFNDHGAQIDRFARSLVAAAKGEPTPEDGYGGDYIQDIASQIVEANPDWQKLGADEAQELFRSQGVELMFAHIKRTLAEFGTEFDVYFHENSLFESGAVEAAIQKIKDNGNLYEADGAWWLRSTNFGDDKDRVVIKSDGNAAYIAGDIAYVADKFDRGHNLCIYMLGADHHGYIARLRAAAAAMGYDPQQVEVLIGQLVNLVKDGKAVRMSKRAGTVITLDDLVEAIGVDAARYAMIRSSVDSSLDIDMDLWASKSNDNPVFYVQYAHARLCSLARKAEDLGVTREGADLSLLTHDREGDLIRTLGEFPAVVKTAAELREPHRVARYAESLAGTFHRFYDACQILPKPSDDEQTVAENKALFAARLSLAAASRQTLANALELLGVAAPERM.

The short motif at 130 to 140 (ANPTGPIHLGG) is the 'HIGH' region element.

It belongs to the class-I aminoacyl-tRNA synthetase family. In terms of assembly, monomer.

The protein resides in the cytoplasm. The enzyme catalyses tRNA(Arg) + L-arginine + ATP = L-arginyl-tRNA(Arg) + AMP + diphosphate. The protein is Arginine--tRNA ligase of Corynebacterium jeikeium (strain K411).